The sequence spans 534 residues: SWI/SNF complex component SNF12 homolog (534 aa).

Polar residues predominate over residues 1–12 (MSGNNNNPQKPQ). Disordered regions lie at residues 1 to 33 (MSGN…PGNQ) and 78 to 132 (MTMN…SPMR). The segment covering 94–105 (PSSPSLTTPGSL) has biased composition (low complexity). Positions 314-391 (YVPEKFKLST…SQKISHHLSP (78 aa)) constitute an SWIB/MDM2 domain.

The protein belongs to the SMARCD family. Part of a SWI-SNF complex.

It is found in the nucleus. Its function is as follows. Involved in transcriptional activation and repression of select genes by chromatin remodeling (alteration of DNA-nucleosome topology). In Arabidopsis thaliana (Mouse-ear cress), this protein is SWI/SNF complex component SNF12 homolog.